Here is a 297-residue protein sequence, read N- to C-terminus: Putative lipid kinase MamU (297 aa).

A DAGKc domain is found at 43–131 (EGKDMGRMVR…MDVGRVNDRY (89 aa)). Position 68-74 (68-74 (GDGSLSR)) interacts with ATP. Residue Glu-274 is the Proton acceptor of the active site.

The protein belongs to the diacylglycerol/lipid kinase family.

The protein localises to the cytoplasm. Might phosphorylate lipids. The polypeptide is Putative lipid kinase MamU (Magnetospirillum gryphiswaldense (strain DSM 6361 / JCM 21280 / NBRC 15271 / MSR-1)).